The chain runs to 335 residues: uncharacterized protein (335 aa).

This is an uncharacterized protein from Acanthamoeba polyphaga mimivirus (APMV).